The chain runs to 433 residues: uncharacterized protein (433 aa).

The protein belongs to the mimivirus R160 family.

Its subcellular location is the virion. This is an uncharacterized protein from Acanthamoeba polyphaga mimivirus (APMV).